The sequence spans 105 residues: Met repressor (105 aa).

This sequence belongs to the MetJ family. Homodimer.

It is found in the cytoplasm. In terms of biological role, this regulatory protein, when combined with SAM (S-adenosylmethionine) represses the expression of the methionine regulon and of enzymes involved in SAM synthesis. This chain is Met repressor, found in Shigella boydii serotype 18 (strain CDC 3083-94 / BS512).